The primary structure comprises 472 residues: Na(+)/H(+) antiporter NhaA 1 (472 aa).

The next 11 membrane-spanning stretches (helical) occupy residues 34–54 (TASITLLLAAIAAMVIANSQW), 86–106 (GLMVLFFFLLGLEIKYECLVG), 116–136 (LVIAMAIGGMLLPAGIYAGVA), 146–166 (GWGIPMATDTAFALGILALLG), 175–195 (VTLSALAIVDDMGAVAVIGLF), 203–223 (TSLMYAGLTLGGLFALNVLGF), 227–247 (IFYLVGGILLWWFVLQSGVHA), 324–344 (PVSLIILPIFAFINAGVALPD), 353–373 (VVFIGVASAMVLGKVIGISVF), 394–414 (VFALACLAGVGFTMSLFIASL), and 428–448 (LGILAGSVIAAIIGTTLFLMI).

It belongs to the NhaA Na(+)/H(+) (TC 2.A.33) antiporter family.

It localises to the cell inner membrane. The catalysed reaction is Na(+)(in) + 2 H(+)(out) = Na(+)(out) + 2 H(+)(in). Functionally, na(+)/H(+) antiporter that extrudes sodium in exchange for external protons. In Pseudoalteromonas atlantica (strain T6c / ATCC BAA-1087), this protein is Na(+)/H(+) antiporter NhaA 1.